A 417-amino-acid chain; its full sequence is NADH-quinone oxidoreductase subunit D (417 aa).

This sequence belongs to the complex I 49 kDa subunit family. As to quaternary structure, NDH-1 is composed of 14 different subunits. Subunits NuoB, C, D, E, F, and G constitute the peripheral sector of the complex.

It localises to the cell inner membrane. The enzyme catalyses a quinone + NADH + 5 H(+)(in) = a quinol + NAD(+) + 4 H(+)(out). Functionally, NDH-1 shuttles electrons from NADH, via FMN and iron-sulfur (Fe-S) centers, to quinones in the respiratory chain. The immediate electron acceptor for the enzyme in this species is believed to be ubiquinone. Couples the redox reaction to proton translocation (for every two electrons transferred, four hydrogen ions are translocated across the cytoplasmic membrane), and thus conserves the redox energy in a proton gradient. This chain is NADH-quinone oxidoreductase subunit D, found in Alkalilimnicola ehrlichii (strain ATCC BAA-1101 / DSM 17681 / MLHE-1).